A 275-amino-acid chain; its full sequence is Ribosomal RNA small subunit methyltransferase A (275 aa).

S-adenosyl-L-methionine-binding residues include Asn21, Leu23, Gly48, Glu69, Asp94, and Asn115.

This sequence belongs to the class I-like SAM-binding methyltransferase superfamily. rRNA adenine N(6)-methyltransferase family. RsmA subfamily.

Its subcellular location is the cytoplasm. The enzyme catalyses adenosine(1518)/adenosine(1519) in 16S rRNA + 4 S-adenosyl-L-methionine = N(6)-dimethyladenosine(1518)/N(6)-dimethyladenosine(1519) in 16S rRNA + 4 S-adenosyl-L-homocysteine + 4 H(+). In terms of biological role, specifically dimethylates two adjacent adenosines (A1518 and A1519) in the loop of a conserved hairpin near the 3'-end of 16S rRNA in the 30S particle. May play a critical role in biogenesis of 30S subunits. This is Ribosomal RNA small subunit methyltransferase A from Clostridium botulinum (strain Loch Maree / Type A3).